The chain runs to 529 residues: MRSEKSLTLAAPGEVRGPEGEQQDAGEFQEAEGGGGCCSSERLVINISGLRFETQLRTLSLFPDTLLGDPGRRVRFFDPLRNEYFFDRNRPSFDAILYYYQSGGRLRRPVNVPLDIFMEEIRFYQLGEEALAAFREDEGCLPEGGEDEKPLPSQPFQRQVWLLFEYPESSGPARGIAIVSVLVILISIVIFCLETLPQFRADGRGGSNEGSGTRLSPASRSHEEEDEDEDSYAFPGSIPSGGLGTGGTSSLSTLGGSFFTDPFFLVETLCIVWFTFELLVRFSACPSKAAFFRNIMNIIDLVAIFPYFITLGTELVQRHEQQSVSGGSGQNGQQAMSLAILRVIRLVRVFRIFKLSRHSKGLQILGKTLQASMRELGLLIFFLFIGVILFSSAVYFAEADDVDSLFPSIPDAFWWAVVTMTTVGYGDMYPMTVGGKIVGSLCAIAGVLTIALPVPVIVSNFNYFYHRETEQEEQGQYTHVTCGQPTPDLKATDNGLGKPDFAEASRERRPSYLPTPHRAYAEKRMLTEV.

Residues 1–35 (MRSEKSLTLAAPGEVRGPEGEQQDAGEFQEAEGGG) are disordered. Topologically, residues 1–171 (MRSEKSLTLA…LLFEYPESSG (171 aa)) are cytoplasmic. Ser3 bears the Phosphoserine mark. Residues 21-30 (EQQDAGEFQE) are compositionally biased toward acidic residues. A helical transmembrane segment spans residues 172–193 (PARGIAIVSVLVILISIVIFCL). The Extracellular portion of the chain corresponds to 194–262 (ETLPQFRADG…TLGGSFFTDP (69 aa)). The segment at 203–238 (GRGGSNEGSGTRLSPASRSHEEEDEDEDSYAFPGSI) is disordered. Polar residues predominate over residues 210-219 (GSGTRLSPAS). The chain crosses the membrane as a helical span at residues 263–284 (FFLVETLCIVWFTFELLVRFSA). The S-palmitoyl cysteine moiety is linked to residue Cys285. Over 285–295 (CPSKAAFFRNI) the chain is Cytoplasmic. A helical transmembrane segment spans residues 296 to 316 (MNIIDLVAIFPYFITLGTELV). Over 317–337 (QRHEQQSVSGGSGQNGQQAMS) the chain is Extracellular. Residues 338–358 (LAILRVIRLVRVFRIFKLSRH) form a helical; Voltage-sensor membrane-spanning segment. At 359–373 (SKGLQILGKTLQASM) the chain is on the cytoplasmic side. The segment at 360-373 (KGLQILGKTLQASM) is S4-S5 linker. Residues 374-395 (RELGLLIFFLFIGVILFSSAVY) traverse the membrane as a helical segment. Topologically, residues 396 to 409 (FAEADDVDSLFPSI) are extracellular. The helical intramembrane region spans 410 to 421 (PDAFWWAVVTMT). The Selectivity filter motif lies at 422 to 427 (TVGYGD). An intramembrane segment occupies 422–429 (TVGYGDMY). The Extracellular segment spans residues 430–436 (PMTVGGK). Residues 437-465 (IVGSLCAIAGVLTIALPVPVIVSNFNYFY) form a helical membrane-spanning segment. The Cytoplasmic segment spans residues 466–529 (HRETEQEEQG…YAEKRMLTEV (64 aa)). Positions 488 to 513 (DLKATDNGLGKPDFAEASRERRPSYL) are disordered. Basic and acidic residues predominate over residues 500–510 (DFAEASRERRP). At Ser511 the chain carries Phosphoserine; by PKA. The PDZ-binding motif lies at 527-529 (TEV).

Belongs to the potassium channel family. A (Shaker) (TC 1.A.1.2) subfamily. Kv1.6/KCNA6 sub-subfamily. As to quaternary structure, homotetramer and heterotetramer of potassium channel proteins. Interacts with KCNAB1 and KCNAB2.

The protein resides in the cell membrane. It catalyses the reaction K(+)(in) = K(+)(out). In terms of biological role, voltage-gated potassium channel that mediates transmembrane potassium transport in excitable membranes. Forms tetrameric potassium-selective channels through which potassium ions pass in accordance with their electrochemical gradient. The channel alternates between opened and closed conformations in response to the voltage difference across the membrane. Can form functional homotetrameric channels and heterotetrameric channels that contain variable proportions of KCNA1, KCNA2, KCNA4, KCNA6, and possibly other family members as well; channel properties depend on the type of alpha subunits that are part of the channel. Channel properties are modulated by cytoplasmic beta subunits that regulate the subcellular location of the alpha subunits and promote rapid inactivation. Homotetrameric channels display rapid activation and slow inactivation. The protein is Potassium voltage-gated channel subfamily A member 6 (Kcna6) of Mus musculus (Mouse).